The sequence spans 211 residues: Large ribosomal subunit protein eL13 (211 aa).

Belongs to the eukaryotic ribosomal protein eL13 family. In terms of assembly, component of the 60S large ribosomal subunit (LSU).

It is found in the cytoplasm. Functionally, component of the ribosome, a large ribonucleoprotein complex responsible for the synthesis of proteins in the cell. The small ribosomal subunit (SSU) binds messenger RNAs (mRNAs) and translates the encoded message by selecting cognate aminoacyl-transfer RNA (tRNA) molecules. The large subunit (LSU) contains the ribosomal catalytic site termed the peptidyl transferase center (PTC), which catalyzes the formation of peptide bonds, thereby polymerizing the amino acids delivered by tRNAs into a polypeptide chain. The nascent polypeptides leave the ribosome through a tunnel in the LSU and interact with protein factors that function in enzymatic processing, targeting, and the membrane insertion of nascent chains at the exit of the ribosomal tunnel. As part of the LSU, it is probably required for its formation and the maturation of rRNAs. The polypeptide is Large ribosomal subunit protein eL13 (rpl13) (Ictalurus punctatus (Channel catfish)).